We begin with the raw amino-acid sequence, 463 residues long: Myocyte-specific enhancer factor 2C (463 aa).

The region spanning 3–57 (RKKIQITRIMDERNRQVTFTKRKFGLMKKAYELSVLCDCEIALIIFNSTNKLFQY) is the MADS-box domain. N6-acetyllysine is present on Lys4. Positions 58–86 (ASTDMDKVLLKYTEYNEPHESRTNSDIVE) form a DNA-binding region, mef2-type. Ser59 bears the Phosphoserine; by CK2 mark. Phosphoserine occurs at positions 98 and 104. N6-acetyllysine is present on residues Lys114 and Lys117. The segment at 178 to 223 (NSMSPGVTHRPPSAGNTGGLMGGDLTSGAGTSAGNGYGNPRNSPGL) is disordered. 2 positions are modified to phosphoserine: Ser220 and Ser226. An N6-acetyllysine mark is found at Lys232 and Lys237. Ser238 bears the Phosphoserine mark. Lys250 and Lys262 each carry N6-acetyllysine. A phosphothreonine; by MAPK7 and MAPK14 mark is found at Thr283 and Thr290. Residues 358–389 (ACTSTHLSQSSNLSLPSTQSLNIKSEPVSPPR) form a transcription repressor region. Positions 365–380 (SQSSNLSLPSTQSLNI) are enriched in polar residues. The disordered stretch occupies residues 365-463 (SQSSNLSLPS…RMRLSEGWAT (99 aa)). Lys381 is covalently cross-linked (Glycyl lysine isopeptide (Lys-Gly) (interchain with G-Cter in SUMO)). Ser386 is modified (phosphoserine; by CDK5). Residue Ser409 is modified to Phosphoserine; by MAPK7. Residues 409–422 (SPVDSLSSCSSSYD) are compositionally biased toward low complexity. Positions 423–433 (GSDREDHRNEF) are enriched in basic and acidic residues. Residue Ser435 is modified to Phosphoserine.

Forms a complex with class II HDACs in undifferentiating cells. On myogenic differentiation, HDACs are released into the cytoplasm allowing MEF2s to interact with other proteins for activation. Interacts with EP300 in differentiating cells; the interaction acetylates MEF2C leading to increased DNA binding and activation. Interacts with HDAC7 and CARM1. Interacts with HDAC4, HDAC7 and HDAC9; the interaction with HDACs represses transcriptional activity. Interacts with LPIN1. Interacts with MYOCD. Interacts with AKAP13. Interacts with FOXK1; the interaction inhibits MEF2C transactivation activity. Interacts (via N-terminus) with HABP4; this interaction decreases DNA-binding activity of MEF2C in myocardial cells in response to mechanical stress. Interacts with JPH2; interaction specifically takes place with the Junctophilin-2 N-terminal fragment cleavage product of JPH2. Interacts (via MADS box) with SOX18. Interacts with PHF7; the interaction promotes MEF2C binding to its transcription targets. Post-translationally, phosphorylated on Ser-59; which enhances DNA binding activity. Phosphorylated on Ser-386; which is required for Lys-381 sumoylation and inhibits transcriptional activity. In terms of processing, acetylated by p300 on several sites in diffentiating myocytes. Acetylation on Lys-4 increases DNA binding and transactivation. Sumoylated on Lys-381 with SUMO2 but not SUMO1; which represses transcriptional activity. Post-translationally, proteolytically cleaved in cerebellar granule neurons on several sites by caspase 3 and caspase 7 following neurotoxicity. Preferentially cleaves the CDK5-mediated hyperphosphorylated form which leads to neuron apoptosis and transcriptional inactivation.

The protein localises to the nucleus. It is found in the cytoplasm. Its subcellular location is the sarcoplasm. Its function is as follows. Transcription activator which binds specifically to the MEF2 element present in the regulatory regions of many muscle-specific genes. Controls cardiac morphogenesis and myogenesis, and is also involved in vascular development. Enhances transcriptional activation mediated by SOX18. Plays an essential role in hippocampal-dependent learning and memory by suppressing the number of excitatory synapses and thus regulating basal and evoked synaptic transmission. Crucial for normal neuronal development, distribution, and electrical activity in the neocortex. Necessary for proper development of megakaryocytes and platelets and for bone marrow B-lymphopoiesis. Required for B-cell survival and proliferation in response to BCR stimulation, efficient IgG1 antibody responses to T-cell-dependent antigens and for normal induction of germinal center B-cells. May also be involved in neurogenesis and in the development of cortical architecture. The polypeptide is Myocyte-specific enhancer factor 2C (Sus scrofa (Pig)).